We begin with the raw amino-acid sequence, 164 residues long: ATP synthase subunit b (164 aa).

Residues 5–25 (IGELIGNFILVAGSFLLLIVL) traverse the membrane as a helical segment.

Belongs to the ATPase B chain family. In terms of assembly, F-type ATPases have 2 components, F(1) - the catalytic core - and F(0) - the membrane proton channel. F(1) has five subunits: alpha(3), beta(3), gamma(1), delta(1), epsilon(1). F(0) has three main subunits: a(1), b(2) and c(10-14). The alpha and beta chains form an alternating ring which encloses part of the gamma chain. F(1) is attached to F(0) by a central stalk formed by the gamma and epsilon chains, while a peripheral stalk is formed by the delta and b chains.

The protein resides in the cell membrane. Its function is as follows. F(1)F(0) ATP synthase produces ATP from ADP in the presence of a proton or sodium gradient. F-type ATPases consist of two structural domains, F(1) containing the extramembraneous catalytic core and F(0) containing the membrane proton channel, linked together by a central stalk and a peripheral stalk. During catalysis, ATP synthesis in the catalytic domain of F(1) is coupled via a rotary mechanism of the central stalk subunits to proton translocation. Component of the F(0) channel, it forms part of the peripheral stalk, linking F(1) to F(0). The chain is ATP synthase subunit b from Streptococcus gordonii (strain Challis / ATCC 35105 / BCRC 15272 / CH1 / DL1 / V288).